The primary structure comprises 132 residues: DNA-directed RNA polymerase subunit Rpo8 (132 aa).

The protein belongs to the archaeal Rpo8 RNA polymerase subunit family. As to quaternary structure, part of the 13-subunit RNA polymerase complex.

The protein resides in the cytoplasm. It catalyses the reaction RNA(n) + a ribonucleoside 5'-triphosphate = RNA(n+1) + diphosphate. DNA-dependent RNA polymerase (RNAP) catalyzes the transcription of DNA into RNA using the four ribonucleoside triphosphates as substrates. The polypeptide is DNA-directed RNA polymerase subunit Rpo8 (Saccharolobus solfataricus (strain ATCC 35092 / DSM 1617 / JCM 11322 / P2) (Sulfolobus solfataricus)).